A 119-amino-acid chain; its full sequence is Large ribosomal subunit protein bL20 (119 aa).

This sequence belongs to the bacterial ribosomal protein bL20 family.

Functionally, binds directly to 23S ribosomal RNA and is necessary for the in vitro assembly process of the 50S ribosomal subunit. It is not involved in the protein synthesizing functions of that subunit. This is Large ribosomal subunit protein bL20 from Herminiimonas arsenicoxydans.